The primary structure comprises 294 residues: Acetylglutamate kinase (294 aa).

Substrate is bound by residues 64–65, Arg86, and Asn189; that span reads GG.

This sequence belongs to the acetylglutamate kinase family. ArgB subfamily.

Its subcellular location is the cytoplasm. The catalysed reaction is N-acetyl-L-glutamate + ATP = N-acetyl-L-glutamyl 5-phosphate + ADP. It participates in amino-acid biosynthesis; L-arginine biosynthesis; N(2)-acetyl-L-ornithine from L-glutamate: step 2/4. Its function is as follows. Catalyzes the ATP-dependent phosphorylation of N-acetyl-L-glutamate. This is Acetylglutamate kinase from Carboxydothermus hydrogenoformans (strain ATCC BAA-161 / DSM 6008 / Z-2901).